Here is a 93-residue protein sequence, read N- to C-terminus: Small ribosomal subunit protein uS19 (93 aa).

This sequence belongs to the universal ribosomal protein uS19 family.

Protein S19 forms a complex with S13 that binds strongly to the 16S ribosomal RNA. The sequence is that of Small ribosomal subunit protein uS19 from Mycolicibacterium smegmatis (strain ATCC 700084 / mc(2)155) (Mycobacterium smegmatis).